A 443-amino-acid polypeptide reads, in one-letter code: sn-2 acyl-lipid omega-3 desaturase (ferredoxin), chloroplastic (443 aa).

Residues Met-1–Arg-51 constitute a chloroplast transit peptide. 2 consecutive transmembrane segments (helical) span residues Met-120 to Leu-140 and Trp-143 to Leu-163. Positions His-165–His-169 match the Histidine box-1 motif. The Histidine box-2 signature appears at His-201–His-205. 2 consecutive transmembrane segments (helical) span residues Thr-281–Val-301 and Leu-304–Leu-324. A Histidine box-3 motif is present at residues His-368–His-372.

It belongs to the fatty acid desaturase type 1 family. In terms of tissue distribution, highly expressed in leaves and cotyledons, while no or little expression detected in mature seeds, roots and stems.

Its subcellular location is the plastid. It localises to the chloroplast membrane. The enzyme catalyses a (7Z,10Z)-hexadecadienoyl-containing glycerolipid + 2 reduced [2Fe-2S]-[ferredoxin] + O2 + 2 H(+) = a (7Z,10Z,13Z)-hexadecatrienoyl-containing glycerolipid + 2 oxidized [2Fe-2S]-[ferredoxin] + 2 H2O. It catalyses the reaction a (9Z,12Z)-octadecadienoyl-containing glycerolipid + 2 reduced [2Fe-2S]-[ferredoxin] + O2 + 2 H(+) = (9Z,12Z,15Z)-octadecatrienoyl-containing glycerolipid + 2 oxidized [2Fe-2S]-[ferredoxin] + 2 H2O. Its pathway is lipid metabolism; polyunsaturated fatty acid biosynthesis. Chloroplast omega-3 fatty acid desaturase introduces the third double bond in the biosynthesis of 18:3, and probably also 16:3 fatty acids, important constituents of plant membranes. It is thought to use ferredoxin as an electron donor and to act on fatty acids esterified to galactolipids, sulfolipids and phosphatidylglycerol. This Helianthus annuus (Common sunflower) protein is sn-2 acyl-lipid omega-3 desaturase (ferredoxin), chloroplastic.